The primary structure comprises 205 residues: Small ribosomal subunit protein uS4 (205 aa).

An S4 RNA-binding domain is found at 94–154 (SRLDNSVYRA…TRKDGKIRKN (61 aa)).

This sequence belongs to the universal ribosomal protein uS4 family. In terms of assembly, part of the 30S ribosomal subunit. Contacts protein S5. The interaction surface between S4 and S5 is involved in control of translational fidelity.

In terms of biological role, one of the primary rRNA binding proteins, it binds directly to 16S rRNA where it nucleates assembly of the body of the 30S subunit. With S5 and S12 plays an important role in translational accuracy. The polypeptide is Small ribosomal subunit protein uS4 (Mesomycoplasma hyopneumoniae (strain 232) (Mycoplasma hyopneumoniae)).